The following is a 932-amino-acid chain: uncharacterized protein (932 aa).

Disordered stretches follow at residues Asn-26–Thr-120, Met-158–Lys-289, Asn-304–Asp-617, Gln-635–Val-720, and Ser-802–Glu-863. Composition is skewed to low complexity over residues Asn-41–Ser-105 and Asn-163–Asn-241. Residues Thr-242–Pro-253 are compositionally biased toward polar residues. Residues Ser-265–Glu-285 are compositionally biased toward acidic residues. Residues Asn-304–Asn-475 are compositionally biased toward low complexity. Composition is skewed to polar residues over residues Glu-476–Ser-492 and Asp-527–Gln-540. Positions Ser-548–Gly-590 are enriched in low complexity. The span at Gly-606–Asp-617 shows a compositional bias: basic and acidic residues. 3 stretches are compositionally biased toward low complexity: residues Gln-635–Ser-666, Ser-696–Ser-707, and Asn-813–Ser-853. A compositionally biased stretch (basic and acidic residues) spans Glu-854–Glu-863.

This is an uncharacterized protein from Dictyostelium discoideum (Social amoeba).